Here is a 742-residue protein sequence, read N- to C-terminus: Dynein axonemal intermediate chain 4 (742 aa).

4 WD repeats span residues 462–502 (HCEC…DFPV), 511–559 (KHTS…DCND), 631–671 (GHKG…PILT), and 674–713 (NTTNAVYDIMWSPSSALMFGAVSENRVEIWDLGVSIIDPV).

As to quaternary structure, part of the multisubunit axonemal dynein complex formed at least of two heavy chains and a number of intermediate and light chains. Associated with axonemal dynein subunits such as, DNAH2, DNAI3, and DYNLT1.

It is found in the cytoplasm. The protein localises to the cytoskeleton. The protein resides in the flagellum axoneme. Its subcellular location is the cilium axoneme. It localises to the dynein axonemal particle. In terms of biological role, plays a critical role in the assembly of axonemal dynein complex, thereby playing a role in ciliary motility. In Xenopus laevis (African clawed frog), this protein is Dynein axonemal intermediate chain 4.